A 150-amino-acid polypeptide reads, in one-letter code: Ribonuclease pancreatic delta-type (150 aa).

The N-terminal stretch at 1–25 (MGLEKSLILFSLLVLVLGWVQPSLG) is a signal peptide. Arginine 35 contributes to the substrate binding site. Catalysis depends on histidine 37, which acts as the Proton acceptor. 4 disulfides stabilise this stretch: cysteine 51-cysteine 110, cysteine 65-cysteine 121, cysteine 83-cysteine 136, and cysteine 90-cysteine 98. Substrate is bound by residues 66–70 (KRVNT), lysine 91, and arginine 111. The active-site Proton donor is histidine 145.

Belongs to the pancreatic ribonuclease family. Monomer.

It is found in the secreted. It carries out the reaction an [RNA] containing cytidine + H2O = an [RNA]-3'-cytidine-3'-phosphate + a 5'-hydroxy-ribonucleotide-3'-[RNA].. The catalysed reaction is an [RNA] containing uridine + H2O = an [RNA]-3'-uridine-3'-phosphate + a 5'-hydroxy-ribonucleotide-3'-[RNA].. Endonuclease that catalyzes the cleavage of RNA on the 3' side of pyrimidine nucleotides. Acts on single-stranded and double-stranded RNA. The protein is Ribonuclease pancreatic delta-type of Rattus exulans (Polynesian rat).